The primary structure comprises 404 residues: Protrudin (404 aa).

The interval 1 to 20 is disordered; sequence MQTSEREGCGPEVSPSTVPE. Residues 1–66 lie on the Cytoplasmic side of the membrane; that stretch reads MQTSEREGCG…AGDGVRYLLR (66 aa). The sufficient for homooligomerization stretch occupies residues 1 to 92; sequence MQTSEREGCG…LFLTLNEGAW (92 aa). Residues 1 to 205 form a sufficient for localization to endoplasmic reticulum tubular network and for interactions with REEP1, REEP5, ATL1, ATL2, ATL3 and SPAST region; it reads MQTSEREGCG…LYLLPLCWVL (205 aa). The segment at 51–64 is necessary for interaction with RAB11A and function in neurite outgrowth; sequence LEPLKDAGDGVRYL. A helical transmembrane segment spans residues 67-87; that stretch reads WQTPLCSLLTCLGLNVLFLTL. N88 is a topological domain (lumenal). The helical transmembrane segment at 89–109 threads the bilayer; that stretch reads EGAWYSVGALMISVPALLGYL. Over 110 to 187 the chain is Cytoplasmic; the sequence is QEGCQARLSE…NPAVSSQFYG (78 aa). The segment at residues 188–208 is an intramembrane region (helical); it reads ALLGTVCMLYLLPLCWVLALL. Residues 209-404 lie on the Cytoplasmic side of the membrane; it reads NSTLFLGNVE…CASCNQTLSK (196 aa). Positions 234 to 286 are disordered; that stretch reads MNPKQEESAFESPPPSDAGGKGALVDCTPAPTPTEDLTPGSVEEAEEAEPDEE. The necessary for interaction with KIF5A stretch occupies residues 271-354; the sequence is TPGSVEEAEE…GCSATFSVLK (84 aa). A compositionally biased stretch (acidic residues) spans 276–286; it reads EEAEEAEPDEE. The interval 286-292 is necessary for interaction with VAPA; sequence EFKDAIE. An FYVE-type zinc finger spans residues 337 to 403; it reads TNNYGSCTGC…VCASCNQTLS (67 aa). Zn(2+) is bound by residues C343, C346, C359, C362, C367, C370, C395, and C398.

As to quaternary structure, can form homooligomers (monomers, dimers and tetramers). Interacts with RAB11A (GDP-bound form); regulates RAB11A. Interacts with FKBP8; may negatively regulate ZFYVE27 phosphorylation. Interacts with VAPA (via MSP domain); may regulate ZFYVE27 retention in the endoplasmic reticulum and its function in cell projections formation. Interacts with VAPB (via MSP domain). Interacts with RAB11B (GDP-bound form), REEP1, REEP5, ATL1, ATL2, ATL3, SPAST, SURF4, KIF5A, KIF5B, KIF5C and RTN3. In terms of processing, phosphorylated. Phosphorylation is induced by NGF through the MAPK/ERK pathway and modulates interaction with RAB11A.

It localises to the recycling endosome membrane. Its subcellular location is the endoplasmic reticulum membrane. The protein localises to the cell projection. It is found in the growth cone membrane. In terms of biological role, key regulator of RAB11-dependent vesicular trafficking during neurite extension through polarized membrane transport. Promotes axonal elongation and contributes to the establishment of neuronal cell polarity. Involved in nerve growth factor-induced neurite formation in VAPA-dependent manner. Contributes to both the formation and stabilization of the tubular ER network. Involved in ER morphogenesis by regulating the sheet-to-tubule balance and possibly the density of tubule interconnections. Acts as an adapter protein that facilitates the interaction of KIF5A with VAPA, VAPB, SURF4, RAB11A, RAB11B and RTN3 and the ZFYVE27-KIF5A complex contributes to the transport of these proteins in neurons. Can induce formation of neurite-like membrane protrusions in non-neuronal cells in a KIF5A/B-dependent manner. The polypeptide is Protrudin (ZFYVE27) (Bos taurus (Bovine)).